Consider the following 373-residue polypeptide: Opsin Rh1 (373 aa).

Topologically, residues 1-54 (MDSFAAVATQLGPHFAALSNGSVVDKVTPDMAHLISPYWNQFPAMDPIWAKILT) are extracellular. The N-linked (GlcNAc...) asparagine glycan is linked to Asn20. A helical transmembrane segment spans residues 55–75 (AYMIIIGMISWCGNGVVIYIF). Topologically, residues 76–86 (ATTKSLRTPAN) are cytoplasmic. The chain crosses the membrane as a helical span at residues 87 to 107 (LLVINLAISDFGIMITNTPMM). At 108-124 (GINLYFETWVLGPMMCD) the chain is on the extracellular side. An intrachain disulfide couples Cys123 to Cys200. The chain crosses the membrane as a helical span at residues 125-145 (IYAGLGSAFGCSSIWSMCMIS). Over 146-162 (LDRYQVIVKGMAGRPMT) the chain is Cytoplasmic. A helical transmembrane segment spans residues 163–183 (IPLALGKIAYIWFMSSIWCLA). The Extracellular segment spans residues 184–219 (PVFGWSRYVPEGNLTSCGIDYLERDWNPRSYLIFYS). A glycan (N-linked (GlcNAc...) asparagine) is linked at Asn196. A helical membrane pass occupies residues 220 to 240 (IFVYYIPLFLICYSYWFIIAA). Residues 241–276 (VSAHEKAMREQAKKMNVKSLRSSEDADKSAEGKLAK) lie on the Cytoplasmic side of the membrane. The chain crosses the membrane as a helical span at residues 277–297 (VALVTISLWFMAWTPYLVINC). At 298–308 (MGLFKFEGLTP) the chain is on the extracellular side. The helical transmembrane segment at 309–331 (LNTIWGACFAKSAACYNPIVYGI) threads the bilayer. N6-(retinylidene)lysine is present on Lys319. The Cytoplasmic portion of the chain corresponds to 332–373 (SHPKYRLALKEKCPCCVFGKVDDGKSSEAQSQATNSEAESKA). Residues 354–373 (DGKSSEAQSQATNSEAESKA) form a disordered region. Residues 358–373 (SEAQSQATNSEAESKA) show a composition bias toward polar residues.

The protein belongs to the G-protein coupled receptor 1 family. Opsin subfamily. Post-translationally, phosphorylated on some or all of the serine and threonine residues present in the C-terminal region.

The protein resides in the cell projection. It is found in the rhabdomere membrane. Functionally, visual pigments are the light-absorbing molecules that mediate vision. They consist of an apoprotein, opsin, covalently linked to cis-retinal. This is Opsin Rh1 (ninaE) from Drosophila pseudoobscura pseudoobscura (Fruit fly).